The primary structure comprises 27 residues: Caerulein precursor fragment R4 (27 aa).

Expressed by the skin glands.

The protein localises to the secreted. Its function is as follows. Antimicrobial peptide. The chain is Caerulein precursor fragment R4 from Xenopus ruwenzoriensis (Uganda clawed frog).